We begin with the raw amino-acid sequence, 698 residues long: Superoxide-generating NADPH oxidase heavy chain subunit B (698 aa).

Disordered stretches follow at residues 1 to 68 and 134 to 158; these read MNEK…NITP and NDQV…NNKN. Over 1 to 184 the chain is Cytoplasmic; the sequence is MNEKKELQQE…KIRGWWWHRG (184 aa). Polar residues-rich tracts occupy residues 16–25 and 33–53; these read FQTPKNQQLE and EISS…PISQ. Composition is skewed to low complexity over residues 54 to 65 and 138 to 156; these read NDNSNNENESLN and NSNT…TNNN. The chain crosses the membrane as a helical span at residues 185 to 205; it reads ISTYIMLFYIALNIGVGVHMF. Over 206–229 the chain is Extracellular; it reads YNMYHSDIFKFLGLSFCFSRTAAR. The region spanning 225-375 is the Ferric oxidoreductase domain; it reads RTAARLINLN…LFIPFYILLC (151 aa). A helical membrane pass occupies residues 230–250; the sequence is LINLNSAVILLPVLRNFLSWL. The Cytoplasmic segment spans residues 251–269; it reads RGTIVNNYIPIDKHLNFHK. The heme site is built by H268 and H282. Residues 270–290 traverse the membrane as a helical segment; the sequence is LCAFMLFCCTIIHCVGHYISF. The Extracellular portion of the chain corresponds to 291–324; sequence KKINDDVLKIDDGKSVAGDYLNININNFPDEKYL. A helical transmembrane segment spans residues 325–345; it reads FFKSVPGITGHIMLLILILIV. Over 346 to 355 the chain is Cytoplasmic; that stretch reads SSSMWRIRRP. A helical transmembrane segment spans residues 356–376; the sequence is MFEIFWYVHHLFIPFYILLCF. Positions 364 and 377 each coordinate heme. At 377–388 the chain is on the extracellular side; the sequence is HGYSKILKKDPQ. A helical transmembrane segment spans residues 389 to 409; sequence SWMWIIAPFILYSIERLIRIA. The FAD-binding FR-type domain occupies 404-528; that stretch reads RLIRIARSKK…DGPFGAPAEN (125 aa). Residues 410–698 are Cytoplasmic-facing; sequence RSKKRVILEK…CHLIFHKENF (289 aa). Residue 460 to 466 participates in FAD binding; sequence HPFTITS.

In terms of assembly, composed of a heavy chain and a light chain. FAD is required as a cofactor.

The protein resides in the membrane. Functionally, critical component of the membrane-bound oxidase that generates superoxide. It is the terminal component of a respiratory chain that transfers single electrons from cytoplasmic NADPH across the plasma membrane to molecular oxygen on the exterior. The polypeptide is Superoxide-generating NADPH oxidase heavy chain subunit B (noxB) (Dictyostelium discoideum (Social amoeba)).